Reading from the N-terminus, the 386-residue chain is Succinate--CoA ligase [ADP-forming] subunit beta (386 aa).

The ATP-grasp domain occupies Lys-9 to Arg-244. ATP-binding positions include Lys-46, Gly-53 to Gly-55, Glu-99, Cys-102, and Glu-107. Mg(2+) contacts are provided by Asn-199 and Asp-213. Substrate is bound by residues Asn-264 and Gly-321–Met-323.

The protein belongs to the succinate/malate CoA ligase beta subunit family. As to quaternary structure, heterotetramer of two alpha and two beta subunits. Mg(2+) is required as a cofactor.

It catalyses the reaction succinate + ATP + CoA = succinyl-CoA + ADP + phosphate. The enzyme catalyses GTP + succinate + CoA = succinyl-CoA + GDP + phosphate. It participates in carbohydrate metabolism; tricarboxylic acid cycle; succinate from succinyl-CoA (ligase route): step 1/1. Succinyl-CoA synthetase functions in the citric acid cycle (TCA), coupling the hydrolysis of succinyl-CoA to the synthesis of either ATP or GTP and thus represents the only step of substrate-level phosphorylation in the TCA. The beta subunit provides nucleotide specificity of the enzyme and binds the substrate succinate, while the binding sites for coenzyme A and phosphate are found in the alpha subunit. This Rickettsia conorii (strain ATCC VR-613 / Malish 7) protein is Succinate--CoA ligase [ADP-forming] subunit beta.